We begin with the raw amino-acid sequence, 227 residues long: Adapter protein MecA 1 (227 aa).

It belongs to the MecA family. Homodimer.

Enables the recognition and targeting of unfolded and aggregated proteins to the ClpC protease or to other proteins involved in proteolysis. Acts negatively in the development of competence by binding ComK and recruiting it to the ClpCP protease. When overexpressed, inhibits sporulation. Also involved in Spx degradation by ClpC. In Bacillus cereus (strain ATCC 14579 / DSM 31 / CCUG 7414 / JCM 2152 / NBRC 15305 / NCIMB 9373 / NCTC 2599 / NRRL B-3711), this protein is Adapter protein MecA 1 (mecA1).